A 366-amino-acid chain; its full sequence is Carbamoyl phosphate synthase small chain (366 aa).

The tract at residues 1 to 174 (MQEIPAILVL…GERYTVDNPD (174 aa)) is CPSase. L-glutamine-binding residues include serine 48, glycine 226, and glycine 228. One can recognise a Glutamine amidotransferase type-1 domain in the interval 178 to 366 (HVVAFDYGIK…FTELMERLKN (189 aa)). Cysteine 256 (nucleophile) is an active-site residue. Residues leucine 257, glutamine 260, asparagine 298, glycine 300, and phenylalanine 301 each contribute to the L-glutamine site. Residues histidine 340 and glutamate 342 contribute to the active site.

This sequence belongs to the CarA family. Composed of two chains; the small (or glutamine) chain promotes the hydrolysis of glutamine to ammonia, which is used by the large (or ammonia) chain to synthesize carbamoyl phosphate. Tetramer of heterodimers (alpha,beta)4.

The catalysed reaction is hydrogencarbonate + L-glutamine + 2 ATP + H2O = carbamoyl phosphate + L-glutamate + 2 ADP + phosphate + 2 H(+). It catalyses the reaction L-glutamine + H2O = L-glutamate + NH4(+). Its pathway is amino-acid biosynthesis; L-arginine biosynthesis; carbamoyl phosphate from bicarbonate: step 1/1. The protein operates within pyrimidine metabolism; UMP biosynthesis via de novo pathway; (S)-dihydroorotate from bicarbonate: step 1/3. Small subunit of the glutamine-dependent carbamoyl phosphate synthetase (CPSase). CPSase catalyzes the formation of carbamoyl phosphate from the ammonia moiety of glutamine, carbonate, and phosphate donated by ATP, constituting the first step of 2 biosynthetic pathways, one leading to arginine and/or urea and the other to pyrimidine nucleotides. The small subunit (glutamine amidotransferase) binds and cleaves glutamine to supply the large subunit with the substrate ammonia. This Chlorobaculum tepidum (strain ATCC 49652 / DSM 12025 / NBRC 103806 / TLS) (Chlorobium tepidum) protein is Carbamoyl phosphate synthase small chain.